The sequence spans 241 residues: Phosphoglycolate phosphatase (241 aa).

The active-site Nucleophile is Asp-8. Mg(2+) is bound by residues Asp-8, Asp-10, and Asp-174.

It belongs to the HAD-like hydrolase superfamily. CbbY/CbbZ/Gph/YieH family. Mg(2+) is required as a cofactor.

The catalysed reaction is 2-phosphoglycolate + H2O = glycolate + phosphate. It participates in organic acid metabolism; glycolate biosynthesis; glycolate from 2-phosphoglycolate: step 1/1. Specifically catalyzes the dephosphorylation of 2-phosphoglycolate. Is involved in the dissimilation of the intracellular 2-phosphoglycolate formed during the DNA repair of 3'-phosphoglycolate ends, a major class of DNA lesions induced by oxidative stress. In Rhodospirillum rubrum (strain ATCC 11170 / ATH 1.1.1 / DSM 467 / LMG 4362 / NCIMB 8255 / S1), this protein is Phosphoglycolate phosphatase.